Consider the following 498-residue polypeptide: Fascin-3 (498 aa).

The protein belongs to the fascin family. As to expression, expressed in testis.

It localises to the cytoplasm. The protein localises to the cytoskeleton. Functionally, acts as an actin bundling protein. This Homo sapiens (Human) protein is Fascin-3 (FSCN3).